Reading from the N-terminus, the 110-residue chain is Large ribosomal subunit protein P2C (110 aa).

Residues 83 to 110 form a disordered region; that stretch reads APAAEEAAKEEAKEEEESDEDMGFGLFD. Positions 95–104 are enriched in acidic residues; the sequence is KEEEESDEDM. The residue at position 100 (serine 100) is a Phosphoserine.

The protein belongs to the eukaryotic ribosomal protein P1/P2 family. As to quaternary structure, component of the large ribosomal subunit (LSU). Mature yeast ribosomes consist of a small (40S) and a large (60S) subunit. The 40S small subunit contains 1 molecule of ribosomal RNA (18S rRNA) and at least 33 different proteins. The large 60S subunit contains 3 rRNA molecules (25S, 5.8S and 5S rRNA) and at least 46 different proteins. The acidic ribosomal P-proteins form the stalk structure of the 60S subunit. They are organized as a pentameric complex in which uL10/P0 interacts with 2 heterodimers of P1 and P2 proteins.

The protein resides in the cytoplasm. Its function is as follows. Component of the ribosome, a large ribonucleoprotein complex responsible for the synthesis of proteins in the cell. The small ribosomal subunit (SSU) binds messenger RNAs (mRNAs) and translates the encoded message by selecting cognate aminoacyl-transfer RNA (tRNA) molecules. The large subunit (LSU) contains the ribosomal catalytic site termed the peptidyl transferase center (PTC), which catalyzes the formation of peptide bonds, thereby polymerizing the amino acids delivered by tRNAs into a polypeptide chain. The nascent polypeptides leave the ribosome through a tunnel in the LSU and interact with protein factors that function in enzymatic processing, targeting, and the membrane insertion of nascent chains at the exit of the ribosomal tunnel. In Schizosaccharomyces pombe (strain 972 / ATCC 24843) (Fission yeast), this protein is Large ribosomal subunit protein P2C (rpp203).